A 306-amino-acid polypeptide reads, in one-letter code: Bifunctional protein FolD (306 aa).

NADP(+) is bound by residues 169–171 (GRS), S194, and I235.

This sequence belongs to the tetrahydrofolate dehydrogenase/cyclohydrolase family. In terms of assembly, homodimer.

The catalysed reaction is (6R)-5,10-methylene-5,6,7,8-tetrahydrofolate + NADP(+) = (6R)-5,10-methenyltetrahydrofolate + NADPH. It catalyses the reaction (6R)-5,10-methenyltetrahydrofolate + H2O = (6R)-10-formyltetrahydrofolate + H(+). It functions in the pathway one-carbon metabolism; tetrahydrofolate interconversion. Its function is as follows. Catalyzes the oxidation of 5,10-methylenetetrahydrofolate to 5,10-methenyltetrahydrofolate and then the hydrolysis of 5,10-methenyltetrahydrofolate to 10-formyltetrahydrofolate. In Thermosynechococcus vestitus (strain NIES-2133 / IAM M-273 / BP-1), this protein is Bifunctional protein FolD.